Reading from the N-terminus, the 479-residue chain is Phosphatidylinositol 4-kinase type 2-beta (479 aa).

Residues 1-10 are compositionally biased toward acidic residues; it reads MESGSEEPDE. A disordered region spans residues 1-91; sequence MESGSEEPDE…PRVGAGHTGH (91 aa). Low complexity predominate over residues 18–34; sequence PALHAGPPAGRAAPGGA. A compositionally biased stretch (acidic residues) spans 42–62; the sequence is GLEEEEEGEEDSGPEGDGEEE. One can recognise a PI3K/PI4K catalytic domain in the interval 118–449; it reads GVLPERISQG…VQMPRVIVER (332 aa). The interval 124 to 130 is G-loop; that stretch reads ISQGSSG. Serine 131 and lysine 146 together coordinate ATP. The important for substrate binding stretch occupies residues 151–153; sequence EPY. Residues 159–172 are important for interaction with membranes; that stretch reads KWTKYFHKICCPCC. Residues 255 to 258 and 269 to 270 contribute to the ATP site; these read QLFV and RK. The tract at residues 262-270 is important for interaction with membranes; sequence KEADYWLRK. The tract at residues 299–307 is catalytic loop; sequence RNTDRGNDN. An activation loop region spans residues 340-360; sequence AIDNGLAFPFKHPDEWRAYPF. Position 342 (aspartate 342) interacts with ATP. Residues 355–364 are important for interaction with membranes; the sequence is WRAYPFHWAW.

The protein belongs to the PI3/PI4-kinase family. Type II PI4K subfamily.

The protein resides in the cytoplasm. It localises to the cytosol. Its subcellular location is the golgi apparatus membrane. The protein localises to the endoplasmic reticulum membrane. It is found in the cell membrane. The protein resides in the early endosome membrane. It catalyses the reaction a 1,2-diacyl-sn-glycero-3-phospho-(1D-myo-inositol) + ATP = a 1,2-diacyl-sn-glycero-3-phospho-(1D-myo-inositol 4-phosphate) + ADP + H(+). Functionally, contributes to the overall PI4-kinase activity of the cell. This contribution may be especially significant in plasma membrane, endosomal and Golgi compartments. The phosphorylation of phosphatidylinositol (PI) to PI4P is the first committed step in the generation of phosphatidylinositol 4,5-bisphosphate (PIP2), a precursor of the second messenger inositol 1,4,5-trisphosphate (InsP3). In Gallus gallus (Chicken), this protein is Phosphatidylinositol 4-kinase type 2-beta (PI4K2B).